The chain runs to 66 residues: M-poneratoxin-Dq3a (66 aa).

An N-terminal signal peptide occupies residues 1–23 (MKLSALSIIFGMILVMTIMYTKA). A propeptide spanning residues 24-43 (EAEAEAEADADADAKAEAEA) is cleaved from the precursor.

The protein belongs to the non-disulfide-bridged peptide (NDBP) superfamily. Medium-length antimicrobial peptide (group 3) family. Ponericin-W subfamily. In terms of tissue distribution, expressed by the venom gland.

The protein localises to the secreted. It localises to the target cell membrane. Functionally, may have antimicrobial properties by disrupting the integrity of the bacterial cell membrane. In addition, when tested in vitro on the parasite Trypanosoma cruzi (responsible of the Chagas disease), is able to potently reduce the number of the three forms (epimastigote, trypomastigote and amastigote) by inducing cell death through necrosis. Its function is as follows. May have antimicrobial properties by disrupting the integrity of the bacterial cell membrane. In addition, when tested in vitro on the parasite Trypanosoma cruzi (responsible of the Chagas disease), is able to moderately reduce the number of the forms epimastigote and trypomastigote. Its activity on the amastigote form has not been tested. In terms of biological role, may have antimicrobial properties by disrupting the integrity of the bacterial cell membrane. In addition, when tested in vitro on the parasite Trypanosoma cruzi (responsible of the Chagas disease), shows only a weak reduction of the number of the trypomastigote forms. Has no activity on the epimastigote forms. Its activity on the amastigote form has not been tested. This chain is M-poneratoxin-Dq3a, found in Dinoponera quadriceps (South American ant).